Reading from the N-terminus, the 97-residue chain is Cobalt transport protein CbiN (97 aa).

The next 2 membrane-spanning stretches (helical) occupy residues 6–26 (VLMI…YSGL) and 68–88 (SLLF…FFGY).

It belongs to the CbiN family. Forms an energy-coupling factor (ECF) transporter complex composed of an ATP-binding protein (A component, CbiO), a transmembrane protein (T component, CbiQ) and 2 possible substrate-capture proteins (S components, CbiM and CbiN) of unknown stoichimetry.

Its subcellular location is the cell membrane. It functions in the pathway cofactor biosynthesis; adenosylcobalamin biosynthesis. Its function is as follows. Part of the energy-coupling factor (ECF) transporter complex CbiMNOQ involved in cobalt import. The sequence is that of Cobalt transport protein CbiN from Methanococcus maripaludis (strain C7 / ATCC BAA-1331).